The chain runs to 123 residues: Protein Rev (123 aa).

The residue at position 5 (serine 5) is a Phosphoserine; by host CK2. Residues 18 to 26 (IIKTLYQSN) form a homomultimerization region. Disordered stretches follow at residues 24–50 (QSNP…ARQR) and 79–123 (EGLS…GTKE). The short motif at 34–50 (TRQARKNRRRRWRARQR) is the Nuclear localization signal and RNA-binding (RRE) element. The span at 36–50 (QARKNRRRRWRARQR) shows a compositional bias: basic residues. The short motif at 73–84 (FQLPPLEGLSLD) is the Nuclear export signal and binding to XPO1 element. Position 92 is a phosphoserine; by host (serine 92). Residues 93–105 (GTQQPQGTETGVG) are compositionally biased toward low complexity.

This sequence belongs to the HIV-1 REV protein family. In terms of assembly, homomultimer; when bound to the RRE. Multimeric assembly is essential for activity and may involve XPO1. Binds to human KPNB1, XPO1, TNPO1, RANBP5 and IPO7. Interacts with the viral Integrase. Interacts with human KHDRBS1. Interacts with human NAP1; this interaction decreases Rev multimerization and stimulates its activity. Interacts with human DEAD-box helicases DDX3 and DDX24; these interactions may serve for viral RNA export to the cytoplasm and packaging, respectively. Interacts with human PSIP1; this interaction may inhibit HIV-1 DNA integration by promoting dissociation of the Integrase-LEDGF/p75 complex. In terms of processing, asymmetrically arginine dimethylated at one site by host PRMT6. Methylation impairs the RNA-binding activity and export of viral RNA from the nucleus to the cytoplasm. Post-translationally, phosphorylated by protein kinase CK2. Presence of, and maybe binding to the N-terminus of the regulatory beta subunit of CK2 is necessary for CK2-mediated Rev's phosphorylation.

It localises to the host nucleus. The protein localises to the host nucleolus. Its subcellular location is the host cytoplasm. Functionally, escorts unspliced or incompletely spliced viral pre-mRNAs (late transcripts) out of the nucleus of infected cells. These pre-mRNAs carry a recognition sequence called Rev responsive element (RRE) located in the env gene, that is not present in fully spliced viral mRNAs (early transcripts). This function is essential since most viral proteins are translated from unspliced or partially spliced pre-mRNAs which cannot exit the nucleus by the pathway used by fully processed cellular mRNAs. Rev itself is translated from a fully spliced mRNA that readily exits the nucleus. Rev's nuclear localization signal (NLS) binds directly to KPNB1/Importin beta-1 without previous binding to KPNA1/Importin alpha-1. KPNB1 binds to the GDP bound form of RAN (Ran-GDP) and targets Rev to the nucleus. In the nucleus, the conversion from Ran-GDP to Ran-GTP dissociates Rev from KPNB1 and allows Rev's binding to the RRE in viral pre-mRNAs. Rev multimerization on the RRE via cooperative assembly exposes its nuclear export signal (NES) to the surface. Rev can then form a complex with XPO1/CRM1 and Ran-GTP, leading to nuclear export of the complex. Conversion from Ran-GTP to Ran-GDP mediates dissociation of the Rev/RRE/XPO1/RAN complex, so that Rev can return to the nucleus for a subsequent round of export. Beside KPNB1, also seems to interact with TNPO1/Transportin-1, RANBP5/IPO5 and IPO7/RANBP7 for nuclear import. The nucleoporin-like HRB/RIP is an essential cofactor that probably indirectly interacts with Rev to release HIV RNAs from the perinuclear region to the cytoplasm. The protein is Protein Rev of Human immunodeficiency virus type 1 group M subtype G (isolate 92NG083) (HIV-1).